Here is a 138-residue protein sequence, read N- to C-terminus: Acidic phospholipase A2 Ts-A6 (138 aa).

The signal sequence occupies residues 1-16; sequence MRALWIMAVLLLGVEG. 7 disulfides stabilise this stretch: Cys-42–Cys-131, Cys-44–Cys-60, Cys-59–Cys-111, Cys-65–Cys-138, Cys-66–Cys-104, Cys-73–Cys-97, and Cys-91–Cys-102. Residues Tyr-43, Gly-45, and Gly-47 each contribute to the Ca(2+) site. The active site involves His-63. Position 64 (Asp-64) interacts with Ca(2+). Residue Asp-105 is part of the active site.

It depends on Ca(2+) as a cofactor. In terms of tissue distribution, expressed by the venom gland.

The protein resides in the secreted. The catalysed reaction is a 1,2-diacyl-sn-glycero-3-phosphocholine + H2O = a 1-acyl-sn-glycero-3-phosphocholine + a fatty acid + H(+). Its function is as follows. Snake venom phospholipase A2 (PLA2) that shows a moderate inhibition of ADP-induced human platelet aggregation when tested on platelet rich plasma. Exhibits high hydrolytic activities and prefers the anionic micelles (dPPC with deoxycholate) to the zwitterionic micelles (dPPC with Triton X-100). PLA2 catalyzes the calcium-dependent hydrolysis of the 2-acyl groups in 3-sn-phosphoglycerides. The protein is Acidic phospholipase A2 Ts-A6 of Trimeresurus stejnegeri (Chinese green tree viper).